The sequence spans 347 residues: GPN-loop GTPase 2 (347 aa).

Gly-12–Thr-17 provides a ligand contact to GTP. Residues Gly-69–Asn-71 carry the Gly-Pro-Asn (GPN)-loop; involved in dimer interface motif. Ser-175–Asp-178 is a binding site for GTP.

It belongs to the GPN-loop GTPase family. Heterodimers with NPA3/GPN1 or GPN3. Binds to RNA polymerase II (RNAPII).

It is found in the cytoplasm. Small GTPase required for proper localization of RNA polymerase II and III (RNAPII and RNAPIII). May act at an RNAP assembly step prior to nuclear import. Required for establishment of sister chromatid cohesion. This Saccharomyces cerevisiae (strain ATCC 204508 / S288c) (Baker's yeast) protein is GPN-loop GTPase 2.